The chain runs to 103 residues: Histone H4 (103 aa).

Positions 1–14 (MSGRGKGGKGLGKG) are enriched in gly residues. Residues 1-20 (MSGRGKGGKGLGKGGAKRHR) are disordered. Residue Ser-2 is modified to N-acetylserine. Lys-17 carries the N6-acetyllysine modification. Residues 17 to 21 (KRHRK) mediate DNA binding. Lys-21 carries the post-translational modification N6-methyllysine.

This sequence belongs to the histone H4 family. In terms of assembly, the nucleosome is a histone octamer containing two molecules each of H2A, H2B, H3 and H4 assembled in one H3-H4 heterotetramer and two H2A-H2B heterodimers. The octamer wraps approximately 147 bp of DNA.

The protein localises to the nucleus. It is found in the chromosome. Its function is as follows. Core component of nucleosome. Nucleosomes wrap and compact DNA into chromatin, limiting DNA accessibility to the cellular machineries which require DNA as a template. Histones thereby play a central role in transcription regulation, DNA repair, DNA replication and chromosomal stability. DNA accessibility is regulated via a complex set of post-translational modifications of histones, also called histone code, and nucleosome remodeling. This Capsicum annuum (Capsicum pepper) protein is Histone H4.